A 586-amino-acid polypeptide reads, in one-letter code: Septin-9 (586 aa).

An N-acetylmethionine modification is found at Met-1. The segment covering 1-14 (MKKSYSGGTRTSSG) has biased composition (low complexity). Disordered stretches follow at residues 1–49 (MKKS…RVQT), 62–108 (KFQD…SRRT), and 134–268 (RAEV…PASR). Phosphoserine is present on residues Ser-22 and Ser-30. Phosphothreonine is present on residues Thr-38, Thr-42, and Thr-49. The residue at position 62 (Lys-62) is an N6-acetyllysine. A phosphoserine mark is found at Ser-82, Ser-85, Ser-89, and Ser-96. Residues 134–151 (RAEVLGHKTPEPAPRRTE) show a composition bias toward basic and acidic residues. Thr-142 carries the post-translational modification Phosphothreonine. Phosphotyrosine is present on Tyr-278. Residues 295–567 (QGFEFNIMVV…EAYRVKRLNE (273 aa)) enclose the Septin-type G domain. Residues 305–312 (GQSGLGKS) form a G1 motif region. 305 to 312 (GQSGLGKS) lines the GTP pocket. A phosphoserine mark is found at Ser-327 and Ser-332. GTP contacts are provided by residues Thr-339, Gly-365, 445–453 (KADTLTLEE), Gly-501, and Arg-516. The interval 362–365 (DTPG) is G3 motif. The interval 444–447 (AKAD) is G4 motif.

It belongs to the TRAFAC class TrmE-Era-EngA-EngB-Septin-like GTPase superfamily. Septin GTPase family. In terms of assembly, septins polymerize into heterooligomeric protein complexes that form filaments, and associate with cellular membranes, actin filaments, and microtubules. GTPase activity is required for filament formation. Interacts with SEPTIN2, SEPTIN6, SEPTIN7, SEPTIN11 and SEPTIN14. Interacts with RTKN and ARHGEF18. In a mesenchymal cell line, Rho/RTKN signals cause disruption of wild-type septin filaments, but not of those containing isoform 2 variants HNA Trp-106 and Phe-111. In a mesenchymal cell line, isoform 2 variants HNA Trp-106 and Phe-111, but not wild type, form filaments with SEPTIN4. As to expression, widely expressed. Isoforms are differentially expressed in testes, kidney, liver heart, spleen, brain, peripheral blood leukocytes, skeletal muscle and kidney. Specific isoforms appear to demonstrate tissue specificity. Isoform 5 is the most highly expressed in fetal tissue. Isoform 1 is detected in all tissues except the brain and thymus, while isoform 2, isoform 3, and isoform 4 are detected at low levels in approximately half of the fetal tissues.

The protein resides in the cytoplasm. The protein localises to the cytoskeleton. Its function is as follows. Filament-forming cytoskeletal GTPase. May play a role in cytokinesis (Potential). May play a role in the internalization of 2 intracellular microbial pathogens, Listeria monocytogenes and Shigella flexneri. The chain is Septin-9 from Homo sapiens (Human).